The sequence spans 654 residues: Fructose-1,6-bisphosphatase class 3 (654 aa).

Positions Asn288–Glu307 are disordered. Positions Asp298–Glu307 are enriched in basic and acidic residues.

This sequence belongs to the FBPase class 3 family. It depends on Mn(2+) as a cofactor.

It carries out the reaction beta-D-fructose 1,6-bisphosphate + H2O = beta-D-fructose 6-phosphate + phosphate. It participates in carbohydrate biosynthesis; gluconeogenesis. This Staphylococcus aureus (strain bovine RF122 / ET3-1) protein is Fructose-1,6-bisphosphatase class 3.